Here is a 76-residue protein sequence, read N- to C-terminus: Frizzled-3 (76 aa).

The Cytoplasmic portion of the chain corresponds to 1–5; it reads YPERP. A helical membrane pass occupies residues 6–26; it reads IIFYAVCYMMVSLIFFIGFLL. Topologically, residues 27 to 54 are extracellular; sequence EDRVACNASSPAQYKASTVTQGSHNKAC. An N-linked (GlcNAc...) asparagine glycan is attached at N33. Residues 55 to 75 traverse the membrane as a helical segment; sequence TMLFMVLYFFTMAGSVWWVIL. A topological domain (cytoplasmic) is located at residue R76.

Belongs to the G-protein coupled receptor Fz/Smo family.

The protein localises to the membrane. The protein resides in the cell membrane. It localises to the cell surface. Its subcellular location is the apical cell membrane. Its function is as follows. Receptor for Wnt proteins. Most of frizzled receptors are coupled to the beta-catenin canonical signaling pathway, which leads to the activation of disheveled proteins, inhibition of GSK-3 kinase, nuclear accumulation of beta-catenin and activation of Wnt target genes. A second signaling pathway involving PKC and calcium fluxes has been seen for some family members, but it is not yet clear if it represents a distinct pathway or if it can be integrated in the canonical pathway, as PKC seems to be required for Wnt-mediated inactivation of GSK-3 kinase. Both pathways seem to involve interactions with G-proteins. May be involved in transduction and intercellular transmission of polarity information during tissue morphogenesis and/or in differentiated tissues. Plays a role in controlling early axon growth and guidance processes necessary for the formation of a subset of central and peripheral major fiber tracts. Involved in the migration of cranial neural crest cells. May also be implicated in the transmission of sensory information from the trunk and limbs to the brain. Controls commissural sensory axons guidance after midline crossing along the anterior-posterior axis in the developing spinal cord in a Wnt-dependent signaling pathway. Together with FZD6, is involved in the neural tube closure and plays a role in the regulation of the establishment of planar cell polarity (PCP). Promotes neurogenesis by maintaining sympathetic neuroblasts within the cell cycle in a beta-catenin-dependent manner. In Gallus gallus (Chicken), this protein is Frizzled-3 (FZD3).